A 1129-amino-acid polypeptide reads, in one-letter code: Translation initiation factor IF-2 (1129 aa).

2 stretches are compositionally biased toward low complexity: residues 33–42 (AARSHSSSIS) and 56–99 (GGSP…AAKP). Disordered regions lie at residues 33–462 (AARS…IGEN) and 485–515 (SLARPSKPRTKHKPAPKPVAAIRKRRKETAR). Pro residues predominate over residues 100-112 (SPKPSAPSRPEAP). A compositionally biased stretch (low complexity) spans 135-147 (STPAAAAPAAAPS). The span at 148–161 (APAPSAPTPRPKPT) shows a compositional bias: pro residues. The span at 162 to 175 (APKASAPAPTASAP) shows a compositional bias: low complexity. 2 stretches are compositionally biased toward pro residues: residues 176-191 (SAPPRPTSARPTPAPA) and 211-221 (PTAPPTRPQPK). Residues 257-273 (GQRPGVSPRPSGPPGQR) are compositionally biased toward low complexity. The span at 431–445 (GRPDWDDSAKLEALR) shows a compositional bias: basic and acidic residues. Basic residues-rich tracts occupy residues 490 to 499 (SKPRTKHKPA) and 506 to 515 (IRKRRKETAR). Positions 621–793 (RRPPVVTVMG…ILLVTEVEDL (173 aa)) constitute a tr-type G domain. A G1 region spans residues 630-637 (GHVDHGKT). 630–637 (GHVDHGKT) provides a ligand contact to GTP. The tract at residues 655-659 (GITQH) is G2. Residues 680–683 (DTPG) are G3. Residues 680–684 (DTPGH) and 734–737 (NKID) contribute to the GTP site. The tract at residues 734–737 (NKID) is G4. Positions 770 to 772 (SAL) are G5.

This sequence belongs to the TRAFAC class translation factor GTPase superfamily. Classic translation factor GTPase family. IF-2 subfamily.

It localises to the cytoplasm. Its function is as follows. One of the essential components for the initiation of protein synthesis. Protects formylmethionyl-tRNA from spontaneous hydrolysis and promotes its binding to the 30S ribosomal subunits. Also involved in the hydrolysis of GTP during the formation of the 70S ribosomal complex. The chain is Translation initiation factor IF-2 from Synechococcus sp. (strain CC9311).